A 98-amino-acid chain; its full sequence is Integration host factor subunit beta (98 aa).

Belongs to the bacterial histone-like protein family. As to quaternary structure, heterodimer of an alpha and a beta chain.

Its function is as follows. This protein is one of the two subunits of integration host factor, a specific DNA-binding protein that functions in genetic recombination as well as in transcriptional and translational control. The sequence is that of Integration host factor subunit beta from Teredinibacter turnerae (strain ATCC 39867 / T7901).